Here is a 287-residue protein sequence, read N- to C-terminus: Large ribosomal subunit protein uL2 (287 aa).

The disordered stretch occupies residues 222-266 (RGIRPTVRGSAMNPNDHPHGGGEGRSPVGRDAPRTPWGKRHMGVK).

The protein belongs to the universal ribosomal protein uL2 family. Part of the 50S ribosomal subunit. Forms a bridge to the 30S subunit in the 70S ribosome.

In terms of biological role, one of the primary rRNA binding proteins. Required for association of the 30S and 50S subunits to form the 70S ribosome, for tRNA binding and peptide bond formation. It has been suggested to have peptidyltransferase activity; this is somewhat controversial. Makes several contacts with the 16S rRNA in the 70S ribosome. This Mycoplasma pneumoniae (strain ATCC 29342 / M129 / Subtype 1) (Mycoplasmoides pneumoniae) protein is Large ribosomal subunit protein uL2.